A 641-amino-acid chain; its full sequence is MTTATEKQTLGFQAEVKQLLHLMIHSLYSNKEIFLRELVSNASDALDKLRFQALSKEDLYEGDNDLKVRLEFDDKAQTITLSDNGIGMSRDEVVTNLGTIAKSGTAEFLSTLTGDQKQDSRLIGQFGVGFYSAFIVADKVEVYTRRAGLKPDEAVHWESSGEGDFSIETVTKEERGTRIVLHLKDEEKEFANGWRLRSLVKKYSDHISFPVEMIKENMDVGEEEEGKEKAEPAPEFESVNEATALWTLPRNEIKDEDYKEFYKHIAHDFSDPLLWAHNRVEGKLDYTSLLYVPAKAPYDLWNREAPRGLKLYIQRVFIMDDAEQFLPLYLRFVKGVVDSNDLSLNVSREILQNDKAVESMRSALTKRVLDMLSKLAADDAEKYQSFWDEFGRVLKEGPAEDFINREKIAKLMRFSSTHQDDDKQTQSLEDYVSRMKQGQDKIYYITAESYSAGVKSPHLEIFRKKGIEVLVMHDRIDEWLMSHLNEFDGKHFQDIAKGELDLGEVEDKEEKEKQEEVSKEAEPLLNRLKEVLKDHVEEVRVTHRLTDSPACLVVGAYDMGVQMRRIMEAAGQALPESKPTFEINPDHPLVKKLGEEQGARFEDLTWVLFDQARLAGGENLKDPAGYVSRLNKLLLELSNAG.

The segment at 1 to 348 (MTTATEKQTL…SNDLSLNVSR (348 aa)) is a; substrate-binding. A b region spans residues 349-565 (EILQNDKAVE…AYDMGVQMRR (217 aa)). Residues 566 to 641 (IMEAAGQALP…KLLLELSNAG (76 aa)) form a c region.

It belongs to the heat shock protein 90 family. As to quaternary structure, homodimer.

The protein resides in the cytoplasm. Functionally, molecular chaperone. Has ATPase activity. This Hahella chejuensis (strain KCTC 2396) protein is Chaperone protein HtpG.